Here is a 95-residue protein sequence, read N- to C-terminus: PqqA binding protein (95 aa).

It belongs to the PqqD family. As to quaternary structure, monomer. Interacts with PqqE.

It participates in cofactor biosynthesis; pyrroloquinoline quinone biosynthesis. Its function is as follows. Functions as a PqqA binding protein and presents PqqA to PqqE, in the pyrroloquinoline quinone (PQQ) biosynthetic pathway. In Rahnella aquatilis, this protein is PqqA binding protein.